We begin with the raw amino-acid sequence, 1018 residues long: Putative type I restriction enzyme MjaVIIIP endonuclease subunit (1018 aa).

It belongs to the HsdR family. As to quaternary structure, the type I restriction/modification system is composed of three polypeptides R, M and S.

The catalysed reaction is Endonucleolytic cleavage of DNA to give random double-stranded fragments with terminal 5'-phosphates, ATP is simultaneously hydrolyzed.. The restriction (R) subunit of a type I restriction enzyme that recognizes 5'-GAYN(5)GTAA-3' and cleaves a random distance away. The R subunit is required for both endonuclease and ATPase activities but not for modification. After locating a non-methylated recognition site, the enzyme complex serves as a molecular motor that translocates DNA in an ATP-dependent manner until a collision occurs that triggers cleavage. This Methanocaldococcus jannaschii (strain ATCC 43067 / DSM 2661 / JAL-1 / JCM 10045 / NBRC 100440) (Methanococcus jannaschii) protein is Putative type I restriction enzyme MjaVIIIP endonuclease subunit.